The following is a 243-amino-acid chain: Phosphoribosylaminoimidazole-succinocarboxamide synthase (243 aa).

This sequence belongs to the SAICAR synthetase family.

It catalyses the reaction 5-amino-1-(5-phospho-D-ribosyl)imidazole-4-carboxylate + L-aspartate + ATP = (2S)-2-[5-amino-1-(5-phospho-beta-D-ribosyl)imidazole-4-carboxamido]succinate + ADP + phosphate + 2 H(+). It functions in the pathway purine metabolism; IMP biosynthesis via de novo pathway; 5-amino-1-(5-phospho-D-ribosyl)imidazole-4-carboxamide from 5-amino-1-(5-phospho-D-ribosyl)imidazole-4-carboxylate: step 1/2. This Thermosynechococcus vestitus (strain NIES-2133 / IAM M-273 / BP-1) protein is Phosphoribosylaminoimidazole-succinocarboxamide synthase.